Here is a 147-residue protein sequence, read N- to C-terminus: MERTFVYLKPNAVRRGLVGEIIKRFEQRGIKIVALKLFWMTREQAERLYEMHKGKNFYNELIEFVTGGPVVAMVVEAPRVIEMVRHIIGNTDPLKAGTGTIRGEFALTVTKNLIHASDSKENFEREYKIFFSENEIVDYYLDVQDDI.

Lysine 9, phenylalanine 57, arginine 85, threonine 91, arginine 102, and asparagine 112 together coordinate ATP. Residue histidine 115 is the Pros-phosphohistidine intermediate of the active site.

This sequence belongs to the NDK family. In terms of assembly, homotetramer. Mg(2+) serves as cofactor.

The protein localises to the cytoplasm. The enzyme catalyses a 2'-deoxyribonucleoside 5'-diphosphate + ATP = a 2'-deoxyribonucleoside 5'-triphosphate + ADP. It catalyses the reaction a ribonucleoside 5'-diphosphate + ATP = a ribonucleoside 5'-triphosphate + ADP. In terms of biological role, major role in the synthesis of nucleoside triphosphates other than ATP. The ATP gamma phosphate is transferred to the NDP beta phosphate via a ping-pong mechanism, using a phosphorylated active-site intermediate. This Thermosipho melanesiensis (strain DSM 12029 / CIP 104789 / BI429) protein is Nucleoside diphosphate kinase.